A 317-amino-acid polypeptide reads, in one-letter code: 1-phosphatidylinositol phosphodiesterase (317 aa).

The first 22 residues, 1–22, serve as a signal peptide directing secretion; sequence MYKNYLQRTLVLLLCFILYFFT. Positions 58 to 196 constitute a PI-PLC X-box domain; that stretch reads LAALSIPGTH…LKDVRGKILL (139 aa). The Proton acceptor role is filled by H67. The active-site Proton donor is the H115.

Monomer.

Its subcellular location is the secreted. It is found in the cytoplasm. It carries out the reaction a 1,2-diacyl-sn-glycero-3-phospho-(1D-myo-inositol) = 1D-myo-inositol 1,2-cyclic phosphate + a 1,2-diacyl-sn-glycerol. Its function is as follows. Cleaves glycosylphosphatidylinositol (GPI) and phosphatidylinositol (PI) anchors but not PI phosphates. Important factor in pathogenesis, PI-PLC activity is present only in virulent listeria species. It may participate in the lysis of the phagolysosomal membrane. The chain is 1-phosphatidylinositol phosphodiesterase (plcA) from Listeria monocytogenes serovar 1/2a (strain ATCC BAA-679 / EGD-e).